A 363-amino-acid chain; its full sequence is G-protein coupled receptor 6 (363 aa).

Residues 1-75 (MNASAAALNE…SGLLLSAVNP (75 aa)) lie on the Extracellular side of the membrane. Residues N2 and N9 are each glycosylated (N-linked (GlcNAc...) asparagine). Residues 29–48 (GAPDTGEWGPPAASAALGGG) are disordered. N52 carries an N-linked (GlcNAc...) asparagine glycan. The helical transmembrane segment at 76–95 (WDVLLCVSGTVIAGENALVV) threads the bilayer. At 96–107 (ALIASTPALRTP) the chain is on the cytoplasmic side. Residues 108-131 (MFVLVGSLATADLLAGCGLILHFV) traverse the membrane as a helical segment. Residues 132 to 143 (FQYVVPSETVSL) are Extracellular-facing. A helical membrane pass occupies residues 144-165 (LMVGFLVASFAASVSSLLAITV). The Cytoplasmic portion of the chain corresponds to 166–186 (DRYLSLYNALTYYSRRTLLGV). The helical transmembrane segment at 187–206 (HLLLAATWTVSLGLGLLPVL) threads the bilayer. The Extracellular segment spans residues 207–231 (GWNCLADRTSCSVVRPLTRSHVALL). Residues 232–250 (STSFFVVFGIMLHLYVRIC) traverse the membrane as a helical segment. The Cytoplasmic portion of the chain corresponds to 251–278 (QVVWRHAHQIALQQHCLAPPHLAATRKG). The chain crosses the membrane as a helical span at residues 279–305 (VGTLAVVLGTFGASWLPFAIYCVVGSQ). The Extracellular portion of the chain corresponds to 306 to 310 (EDPAI). The helical transmembrane segment at 311-332 (YTYATLLPATYNSMINPIIYAF) threads the bilayer. Residues 333 to 363 (RNQEIQRALWLLFCGCFQSKVPFRSRSPSEV) lie on the Cytoplasmic side of the membrane. C346 is lipidated: S-palmitoyl cysteine. Phosphoserine occurs at positions 357, 359, and 361.

The protein belongs to the G-protein coupled receptor 1 family. In terms of tissue distribution, mainly expressed in the brain. Selectively expressed in striatopallidal neurons in the striatum.

It localises to the cell membrane. Orphan receptor with constitutive G(s) signaling activity that activate cyclic AMP. Promotes neurite outgrowth and blocks myelin inhibition in neurons. The polypeptide is G-protein coupled receptor 6 (Gpr6) (Mus musculus (Mouse)).